The following is a 509-amino-acid chain: 2,3-bisphosphoglycerate-independent phosphoglycerate mutase (509 aa).

Asp-12 and Ser-62 together coordinate Mn(2+). The active-site Phosphoserine intermediate is Ser-62. Substrate contacts are provided by residues His-123, 153–154, Arg-185, Arg-191, 260–263, and Lys-333; these read RD and RPDR. Mn(2+) contacts are provided by Asp-400, His-404, Asp-441, His-442, and His-460.

Belongs to the BPG-independent phosphoglycerate mutase family. In terms of assembly, monomer. It depends on Mn(2+) as a cofactor.

It carries out the reaction (2R)-2-phosphoglycerate = (2R)-3-phosphoglycerate. Its pathway is carbohydrate degradation; glycolysis; pyruvate from D-glyceraldehyde 3-phosphate: step 3/5. Functionally, catalyzes the interconversion of 2-phosphoglycerate and 3-phosphoglycerate. This chain is 2,3-bisphosphoglycerate-independent phosphoglycerate mutase, found in Clostridium kluyveri (strain ATCC 8527 / DSM 555 / NBRC 12016 / NCIMB 10680 / K1).